The primary structure comprises 105 residues: Large ribosomal subunit protein eL30 (105 aa).

Residues lysine 22, lysine 53, and lysine 83 each participate in a glycyl lysine isopeptide (Lys-Gly) (interchain with G-Cter in ubiquitin) cross-link.

It belongs to the eukaryotic ribosomal protein eL30 family. As to quaternary structure, component of the large ribosomal subunit (LSU). Mature yeast ribosomes consist of a small (40S) and a large (60S) subunit. The 40S small subunit contains 1 molecule of ribosomal RNA (18S rRNA) and 33 different proteins (encoded by 57 genes). The large 60S subunit contains 3 rRNA molecules (25S, 5.8S and 5S rRNA) and 46 different proteins (encoded by 81 genes).

The protein localises to the cytoplasm. Component of the ribosome, a large ribonucleoprotein complex responsible for the synthesis of proteins in the cell. The small ribosomal subunit (SSU) binds messenger RNAs (mRNAs) and translates the encoded message by selecting cognate aminoacyl-transfer RNA (tRNA) molecules. The large subunit (LSU) contains the ribosomal catalytic site termed the peptidyl transferase center (PTC), which catalyzes the formation of peptide bonds, thereby polymerizing the amino acids delivered by tRNAs into a polypeptide chain. The nascent polypeptides leave the ribosome through a tunnel in the LSU and interact with protein factors that function in enzymatic processing, targeting, and the membrane insertion of nascent chains at the exit of the ribosomal tunnel. The sequence is that of Large ribosomal subunit protein eL30 from Saccharomyces cerevisiae (strain ATCC 204508 / S288c) (Baker's yeast).